We begin with the raw amino-acid sequence, 214 residues long: Large ribosomal subunit protein uL3 (214 aa).

A disordered region spans residues 131-155; that stretch reads GAQRTSHGNSRSHRVPGSIGMAQDP. N5-methylglutamine is present on Gln153.

This sequence belongs to the universal ribosomal protein uL3 family. As to quaternary structure, part of the 50S ribosomal subunit. Forms a cluster with proteins L14 and L19. Post-translationally, methylated by PrmB.

One of the primary rRNA binding proteins, it binds directly near the 3'-end of the 23S rRNA, where it nucleates assembly of the 50S subunit. The polypeptide is Large ribosomal subunit protein uL3 (Neisseria meningitidis serogroup C (strain 053442)).